The sequence spans 518 residues: Maturase K (518 aa).

The protein belongs to the intron maturase 2 family. MatK subfamily.

It localises to the plastid. The protein resides in the chloroplast. Its function is as follows. Usually encoded in the trnK tRNA gene intron. Probably assists in splicing its own and other chloroplast group II introns. The chain is Maturase K from Syzygium cumini (Java plum).